Consider the following 692-residue polypeptide: Elongation factor G (692 aa).

The region spanning Ala-8–Leu-282 is the tr-type G domain. GTP contacts are provided by residues Ala-17–Thr-24, Asp-81–His-85, and Asn-135–Asp-138.

It belongs to the TRAFAC class translation factor GTPase superfamily. Classic translation factor GTPase family. EF-G/EF-2 subfamily.

The protein resides in the cytoplasm. In terms of biological role, catalyzes the GTP-dependent ribosomal translocation step during translation elongation. During this step, the ribosome changes from the pre-translocational (PRE) to the post-translocational (POST) state as the newly formed A-site-bound peptidyl-tRNA and P-site-bound deacylated tRNA move to the P and E sites, respectively. Catalyzes the coordinated movement of the two tRNA molecules, the mRNA and conformational changes in the ribosome. This is Elongation factor G from Streptococcus pyogenes serotype M49 (strain NZ131).